We begin with the raw amino-acid sequence, 213 residues long: MDTLWDISPPVSPATPVWPGDTPVAVERVWRMEAGSPVNVARLTLSPHTGAHCDAPLHYDADGAPIGAVPLDTYLGPCRVIHCIGAAPVVRPADVEAALDGVPPRVLLRTYARAAVEQWDSNFCAVAPDTVDLLAAHGVKLIGIDTPSLDPQESKTMDAHRRVRAHRMAILEGIVLDDVPPGDYELIALPLKFATLDASPVRAVLRALPAQAS.

Trp-18 lines the substrate pocket. The Zn(2+) site is built by His-48, His-52, and Asp-54. Residue His-58 is the Proton donor/acceptor of the active site. The Zn(2+) site is built by His-160 and Glu-172.

Belongs to the Cyclase 1 superfamily. KynB family. In terms of assembly, homodimer. Requires Zn(2+) as cofactor.

The catalysed reaction is N-formyl-L-kynurenine + H2O = L-kynurenine + formate + H(+). It functions in the pathway amino-acid degradation; L-tryptophan degradation via kynurenine pathway; L-kynurenine from L-tryptophan: step 2/2. Functionally, catalyzes the hydrolysis of N-formyl-L-kynurenine to L-kynurenine, the second step in the kynurenine pathway of tryptophan degradation. This is Kynurenine formamidase from Burkholderia cenocepacia (strain ATCC BAA-245 / DSM 16553 / LMG 16656 / NCTC 13227 / J2315 / CF5610) (Burkholderia cepacia (strain J2315)).